Reading from the N-terminus, the 184-residue chain is NADH-quinone oxidoreductase subunit B (184 aa).

Cys-37, Cys-38, Cys-103, and Cys-132 together coordinate [4Fe-4S] cluster.

Belongs to the complex I 20 kDa subunit family. NDH-1 is composed of 14 different subunits. Subunits NuoB, C, D, E, F, and G constitute the peripheral sector of the complex. It depends on [4Fe-4S] cluster as a cofactor.

The protein localises to the cell membrane. The catalysed reaction is a quinone + NADH + 5 H(+)(in) = a quinol + NAD(+) + 4 H(+)(out). Functionally, NDH-1 shuttles electrons from NADH, via FMN and iron-sulfur (Fe-S) centers, to quinones in the respiratory chain. The immediate electron acceptor for the enzyme in this species is believed to be a menaquinone. Couples the redox reaction to proton translocation (for every two electrons transferred, four hydrogen ions are translocated across the cytoplasmic membrane), and thus conserves the redox energy in a proton gradient. In Rhodococcus opacus (strain B4), this protein is NADH-quinone oxidoreductase subunit B.